We begin with the raw amino-acid sequence, 712 residues long: Protein SDA1 homolog (712 aa).

Position 234 is a phosphothreonine (Thr234). Phosphoserine is present on Ser236. 2 disordered regions span residues 488–573 (TIDI…DMRI) and 662–712 (VNEH…KKMK). Composition is skewed to acidic residues over residues 491–501 (IESEDDTDSND) and 516–559 (GADD…ESGE). The segment covering 560-572 (ESAKAKKEKKDMR) has biased composition (basic and acidic residues). Basic residues-rich tracts occupy residues 671-692 (REKR…KVKK) and 700-712 (ALRK…KKMK).

The protein belongs to the SDA1 family.

The protein resides in the nucleus. The protein localises to the nucleolus. Its function is as follows. Required for 60S pre-ribosomal subunits export to the cytoplasm. The protein is Protein SDA1 homolog (Mys45A) of Drosophila melanogaster (Fruit fly).